A 216-amino-acid chain; its full sequence is Minor capsid protein P6 (216 aa).

Residues 1-21 (MILVGIAVLILLAVFAILYYK) are hydrophobic.

In terms of assembly, interacts with the major capsid protein.

The protein resides in the virion. One of the minor capsid proteins that constitute a network internal to the major capsid proteins and outside the lipid membrane. The minor capsid proteins glue and stabilize the capsomers. The sequence is that of Minor capsid protein P6 from Paramecium bursaria Chlorella virus 1 (PBCV-1).